The following is a 118-amino-acid chain: Large ribosomal subunit protein uL22 (118 aa).

Belongs to the universal ribosomal protein uL22 family. In terms of assembly, part of the 50S ribosomal subunit.

Its function is as follows. This protein binds specifically to 23S rRNA; its binding is stimulated by other ribosomal proteins, e.g. L4, L17, and L20. It is important during the early stages of 50S assembly. It makes multiple contacts with different domains of the 23S rRNA in the assembled 50S subunit and ribosome. Functionally, the globular domain of the protein is located near the polypeptide exit tunnel on the outside of the subunit, while an extended beta-hairpin is found that lines the wall of the exit tunnel in the center of the 70S ribosome. The polypeptide is Large ribosomal subunit protein uL22 (Leuconostoc mesenteroides subsp. mesenteroides (strain ATCC 8293 / DSM 20343 / BCRC 11652 / CCM 1803 / JCM 6124 / NCDO 523 / NBRC 100496 / NCIMB 8023 / NCTC 12954 / NRRL B-1118 / 37Y)).